Here is a 331-residue protein sequence, read N- to C-terminus: Phosphoribosylformylglycinamidine cyclo-ligase (331 aa).

This sequence belongs to the AIR synthase family.

The protein localises to the cytoplasm. The catalysed reaction is 2-formamido-N(1)-(5-O-phospho-beta-D-ribosyl)acetamidine + ATP = 5-amino-1-(5-phospho-beta-D-ribosyl)imidazole + ADP + phosphate + H(+). It participates in purine metabolism; IMP biosynthesis via de novo pathway; 5-amino-1-(5-phospho-D-ribosyl)imidazole from N(2)-formyl-N(1)-(5-phospho-D-ribosyl)glycinamide: step 2/2. The polypeptide is Phosphoribosylformylglycinamidine cyclo-ligase (Clostridium botulinum (strain ATCC 19397 / Type A)).